The primary structure comprises 377 residues: Homocitrate synthase 1 (377 aa).

In terms of domain architecture, Pyruvate carboxyltransferase spans 4-255 (VLINDTTLRD…DMGIDTPRLL (252 aa)).

Belongs to the alpha-IPM synthase/homocitrate synthase family.

The enzyme catalyses acetyl-CoA + 2-oxoglutarate + H2O = (2R)-homocitrate + CoA + H(+). This protein is a Fe-Mo-cofactor biosynthetic component. The polypeptide is Homocitrate synthase 1 (nifV1) (Nostoc sp. (strain PCC 7120 / SAG 25.82 / UTEX 2576)).